A 317-amino-acid polypeptide reads, in one-letter code: Putative HTH-type transcriptional regulatory protein Mlab_0160 (317 aa).

The 58-residue stretch at 132–189 (LRTLREEQAMSLGDLAHALGVSRRTISKYEGGMGTTLEMAMRLEEFFNDDIVMPIDLL) folds into the HTH cro/C1-type domain. The segment at residues 143 to 162 (LGDLAHALGVSRRTISKYEG) is a DNA-binding region (H-T-H motif). Residues 199 to 219 (VPASLASGHNPESDAQPKRPE) are disordered. Over residues 209-219 (PESDAQPKRPE) the composition is skewed to basic and acidic residues.

This Methanocorpusculum labreanum (strain ATCC 43576 / DSM 4855 / Z) protein is Putative HTH-type transcriptional regulatory protein Mlab_0160.